The primary structure comprises 320 residues: Aspartate carbamoyltransferase catalytic subunit (320 aa).

The carbamoyl phosphate site is built by arginine 53 and threonine 54. Lysine 82 is an L-aspartate binding site. Positions 103, 131, and 134 each coordinate carbamoyl phosphate. Residues arginine 164 and arginine 227 each contribute to the L-aspartate site. Carbamoyl phosphate-binding residues include leucine 266 and proline 267.

The protein belongs to the aspartate/ornithine carbamoyltransferase superfamily. ATCase family. As to quaternary structure, heterododecamer (2C3:3R2) of six catalytic PyrB chains organized as two trimers (C3), and six regulatory PyrI chains organized as three dimers (R2).

It carries out the reaction carbamoyl phosphate + L-aspartate = N-carbamoyl-L-aspartate + phosphate + H(+). The protein operates within pyrimidine metabolism; UMP biosynthesis via de novo pathway; (S)-dihydroorotate from bicarbonate: step 2/3. In terms of biological role, catalyzes the condensation of carbamoyl phosphate and aspartate to form carbamoyl aspartate and inorganic phosphate, the committed step in the de novo pyrimidine nucleotide biosynthesis pathway. This Bifidobacterium longum (strain NCC 2705) protein is Aspartate carbamoyltransferase catalytic subunit.